We begin with the raw amino-acid sequence, 418 residues long: Serine--tRNA ligase (418 aa).

L-serine is bound at residue 231-233 (TAE). Position 262–264 (262–264 (RSE)) interacts with ATP. Glu285 provides a ligand contact to L-serine. Residue 349-352 (EISS) coordinates ATP. Residue Ser385 coordinates L-serine.

Belongs to the class-II aminoacyl-tRNA synthetase family. Type-1 seryl-tRNA synthetase subfamily. As to quaternary structure, homodimer. The tRNA molecule binds across the dimer.

Its subcellular location is the cytoplasm. The enzyme catalyses tRNA(Ser) + L-serine + ATP = L-seryl-tRNA(Ser) + AMP + diphosphate + H(+). It carries out the reaction tRNA(Sec) + L-serine + ATP = L-seryl-tRNA(Sec) + AMP + diphosphate + H(+). It participates in aminoacyl-tRNA biosynthesis; selenocysteinyl-tRNA(Sec) biosynthesis; L-seryl-tRNA(Sec) from L-serine and tRNA(Sec): step 1/1. Functionally, catalyzes the attachment of serine to tRNA(Ser). Is also able to aminoacylate tRNA(Sec) with serine, to form the misacylated tRNA L-seryl-tRNA(Sec), which will be further converted into selenocysteinyl-tRNA(Sec). The protein is Serine--tRNA ligase of Ureaplasma urealyticum serovar 10 (strain ATCC 33699 / Western).